The primary structure comprises 314 residues: Deoxyhypusine hydroxylase (314 aa).

An N-acetylmethionine modification is found at M1. HEAT-like PBS-type repeat units follow at residues 61–87 (LAHE…VLND), 94–120 (VRHE…SLSS), 188–214 (ERYA…SLSA), 219–245 (LRHE…VLRD), and 252–278 (VRHE…FSKD). 4 residues coordinate Fe cation: H63, E64, H96, and E97. Fe cation contacts are provided by H221, E222, H254, and E255.

Belongs to the deoxyhypusine hydroxylase family. Fe(2+) is required as a cofactor.

It carries out the reaction [eIF5A protein]-deoxyhypusine + AH2 + O2 = [eIF5A protein]-hypusine + A + H2O. It functions in the pathway protein modification; eIF5A hypusination. Functionally, catalyzes the hydroxylation of the N(6)-(4-aminobutyl)-L-lysine intermediate to form hypusine, an essential post-translational modification only found in mature eIF-5A factor. The sequence is that of Deoxyhypusine hydroxylase from Arabidopsis thaliana (Mouse-ear cress).